Here is a 355-residue protein sequence, read N- to C-terminus: Oligopeptide transport ATP-binding protein AmiE (355 aa).

One can recognise an ABC transporter domain in the interval Leu-9–Leu-260. Gly-45–Ser-52 provides a ligand contact to ATP.

The protein belongs to the ABC transporter superfamily.

The protein localises to the cell membrane. Part of the binding-protein-dependent transport system for oligopeptides. Probably responsible for energy coupling to the transport system. The sequence is that of Oligopeptide transport ATP-binding protein AmiE (amiE) from Streptococcus pneumoniae serotype 4 (strain ATCC BAA-334 / TIGR4).